The primary structure comprises 1278 residues: Dynactin subunit 1 (1278 aa).

The interval 1 to 25 is disordered; sequence MAQSKRHVYSRTPSGSRMSAEASAR. The CAP-Gly domain maps to 48 to 90; the sequence is GATLFATGKWVGVILDEAKGKNDGTVQGRKYFTCDEGHGIFVR. Residues 100–223 are disordered; the sequence is GADTTSPETP…SKEEEGLRAQ (124 aa). A compositionally biased stretch (polar residues) spans 102–114; it reads DTTSPETPDSSAS. Phosphothreonine is present on Thr108. Basic residues predominate over residues 129–152; sequence SKLRGLKPKKAPTARKTTTRRPKP. Phosphothreonine; by SLK is present on residues Thr145, Thr146, and Thr147. Residues 161–184 show a composition bias toward low complexity; that stretch reads AGASSSLGPSGSASAGELSSSEPS. Ser179 is subject to Phosphoserine; by PLK1. Residue Ser212 is modified to Phosphoserine; by CDK1. Coiled coils occupy residues 213–547, 943–1049, and 1182–1211; these read PSKE…RQQQ, LKLE…EGLR, and SAQL…KETV. Residues 214–223 show a composition bias toward basic and acidic residues; that stretch reads SKEEEGLRAQ. An interaction with HPS6 region spans residues 911–1278; that stretch reads EYDAERPPSK…LHQLHSRLIS (368 aa).

Belongs to the dynactin 150 kDa subunit family. As to quaternary structure, monomer and homodimer. Subunit of dynactin, a multiprotein complex part of a tripartite complex with dynein and a adapter, such as BICDL1, BICD2 or HOOK3. The dynactin complex is built around ACTR1A/ACTB filament and consists of an actin-related filament composed of a shoulder domain, a pointed end and a barbed end. Its length is defined by its flexible shoulder domain. The soulder is composed of 2 DCTN1 subunits, 4 DCTN2 and 2 DCTN3. DCTN1/p150(glued) binds directly to microtubules and to cytoplasmic dynein. The 4 DCNT2 (via N-terminus) bind the ACTR1A filament and act as molecular rulers to determine the length. The pointed end is important for binding dynein-dynactin cargo adapters. Consists of 4 subunits: ACTR10, DCNT4, DCTN5 and DCTN6. The barbed end is composed of a CAPZA1:CAPZB heterodimers, which binds ACTR1A/ACTB filament and dynactin and stabilizes dynactin. Interacts with the C-terminus of MAPRE1, MAPRE2 and MAPRE3. Interacts (via C-terminus) with SNX6. Interacts with CLN3, DYNAP, ECPAS and FBXL5. Interacts with MISP; this interaction regulates its distribution at the cell cortex. Interacts with CEP131. Interacts with CEP126. Interacts with CLIP1. Interacts with dynein intermediate chain and dynein heavy chain. Interacts with PLK1 (via POLO-box domain). Interacts with TBCB. Binds preferentially to tyrosinated microtubules than to detyrosinated microtubules. Interacts with PARD6A. Interacts with HPS6. Interacts with KIF3A. Interacts with BICD2. Interacts with DST (isoform 9). Interacts with DST (isoform 1). Identified in a complex with MREG and RILP. Interacts with BCCIP (isoform 2/alpha). Interacts with DCDC1. Interacts with AKNA. Interacts with DYNC1I2. Interacts with RUFY3 and RUFY4. Ubiquitinated by a SCF complex containing FBXL5, leading to its degradation by the proteasome. Post-translationally, phosphorylation by SLK at Thr-145, Thr-146 and Thr-147 targets DCTN1 to the centrosome. It is uncertain if SLK phosphorylates all three threonines or one or two of them. PLK1-mediated phosphorylation at Ser-179 is essential for its localization in the nuclear envelope, promotes its dissociation from microtubules during early mitosis and positively regulates nuclear envelope breakdown during prophase. In terms of tissue distribution, brain.

It localises to the cytoplasm. Its subcellular location is the cytoskeleton. The protein resides in the microtubule organizing center. The protein localises to the centrosome. It is found in the centriole. It localises to the spindle. Its subcellular location is the nucleus envelope. The protein resides in the cell cortex. Part of the dynactin complex that activates the molecular motor dynein for ultra-processive transport along microtubules. Plays a key role in dynein-mediated retrograde transport of vesicles and organelles along microtubules by recruiting and tethering dynein to microtubules. Binds to both dynein and microtubules providing a link between specific cargos, microtubules and dynein. Essential for targeting dynein to microtubule plus ends, recruiting dynein to membranous cargos and enhancing dynein processivity (the ability to move along a microtubule for a long distance without falling off the track). Can also act as a brake to slow the dynein motor during motility along the microtubule. Can regulate microtubule stability by promoting microtubule formation, nucleation and polymerization and by inhibiting microtubule catastrophe in neurons. Inhibits microtubule catastrophe by binding both to microtubules and to tubulin, leading to enhanced microtubule stability along the axon. Plays a role in metaphase spindle orientation. Plays a role in centriole cohesion and subdistal appendage organization and function. Its recruitment to the centriole in a KIF3A-dependent manner is essential for the maintenance of centriole cohesion and the formation of subdistal appendage. Also required for microtubule anchoring at the mother centriole. Plays a role in primary cilia formation. The protein is Dynactin subunit 1 of Homo sapiens (Human).